The following is a 251-amino-acid chain: Insulin-induced gene 1 protein (251 aa).

Over 1–58 the chain is Cytoplasmic; it reads MQTLEEHCWSCSCTRGRDKKGTKVSAWLARRVGKAMSSLNSLLSLAYSTLASSEGRSL. The helical transmembrane segment at 59–81 threads the bilayer; sequence IQRSLVLFTVGVFLALVLNLLQI. At 82 to 100 the chain is on the extracellular side; it reads QRNVTLFPEEVIATIFSSA. Residues 101–118 traverse the membrane as a helical segment; that stretch reads WWVPPCCGTAAAVVGLLY. The Cytoplasmic portion of the chain corresponds to 119 to 133; that stretch reads PCIDSRIGEPHKFKR. The chain crosses the membrane as a helical span at residues 134–156; the sequence is EWASVMRCIAVFVGINHASAKLD. Residues 157–159 lie on the Extracellular side of the membrane; the sequence is FAN. A helical membrane pass occupies residues 160 to 178; that stretch reads NVQLSLTLAALSLGLWWTF. The Cytoplasmic portion of the chain corresponds to 179–183; that stretch reads DRSRS. Residues 184–205 traverse the membrane as a helical segment; the sequence is GLGLGITIAFLATLITQFLVYN. Residues 206-219 are Extracellular-facing; the sequence is GVYQYTSPDFLYIR. A helical transmembrane segment spans residues 220–237; that stretch reads SWLPCIFFSGGVTVGNIG. Over 238-251 the chain is Cytoplasmic; that stretch reads RQLAMGSSEKTHGD. The short motif at 245 to 251 is the KxHxx element; sequence SEKTHGD.

The protein belongs to the INSIG family. In terms of assembly, interacts with scap; interaction is direct and only takes place in the presence of sterols; it prevents interaction between scap and the coat protein complex II (COPII). Associates with the SCAP-SREBP complex; association is mediated via its interaction with scap and only takes place in the presence of sterols.

Its subcellular location is the endoplasmic reticulum membrane. Its function is as follows. Oxysterol-binding protein that mediates feedback control of cholesterol synthesis by controlling both endoplasmic reticulum to Golgi transport of scap and degradation of hmgcr. Acts as a negative regulator of cholesterol biosynthesis by mediating the retention of the SCAP-SREBP complex in the endoplasmic reticulum, thereby blocking the processing of sterol regulatory element-binding proteins (SREBPs). Binds oxysterol, including 25-hydroxycholesterol, regulating interaction with scap and retention of the SCAP-SREBP complex in the endoplasmic reticulum. In presence of oxysterol, interacts with scap, retaining the SCAP-SREBP complex in the endoplasmic reticulum, thereby preventing scap from escorting SREBPs to the Golgi. Sterol deprivation reduces oxysterol-binding, disrupting the interaction between insig1 and scap, thereby promoting Golgi transport of the SCAP-SREBP complex, followed by processing and nuclear translocation of SREBPs. Also regulates cholesterol synthesis by regulating degradation of hmgcr. The polypeptide is Insulin-induced gene 1 protein (Xenopus laevis (African clawed frog)).